The sequence spans 363 residues: MDLNEKIINILSSVGLTKNLSIFILDLIPILIILLGATLGVLVIVWLERKISAAVQQRIGPEYAGPLGMIQALADGLKLVLKEDIIPAKGDPWLFSVGPALVVVPVFLSYLVVPFGHELILANLGVGILFWIALSSIAPLGLLMAGYGSNNKYSFLGGLRAAAQAISYEIPLALCVLSVALLSHSLSTVDIVEEQSKYGILGWNIWRQPIGFIAFLIASLAECERLPFDLPEAEEELVAGYQTEYCGIKFGLFYVGSYLNLLVSALFVSVLYLGGWNFSLPWINFPILLTENDFALSLNIVNATLGIAITLGKAYLFLFLSILARWTLPRVRMDQLLDLGWKFLLPVSLGNLLLTASLQLALL.

8 helical membrane-spanning segments follow: residues 27–47 (LIPILIILLGATLGVLVIVWL), 93–113 (WLFSVGPALVVVPVFLSYLVV), 124–144 (LGVGILFWIALSSIAPLGLLM), 162–182 (AAQAISYEIPLALCVLSVALL), 200–220 (ILGWNIWRQPIGFIAFLIASL), 250–270 (FGLFYVGSYLNLLVSALFVSV), 303–323 (ATLGIAITLGKAYLFLFLSIL), and 343–363 (FLLPVSLGNLLLTASLQLALL).

It belongs to the complex I subunit 1 family. NDH is composed of at least 16 different subunits, 5 of which are encoded in the nucleus.

It localises to the plastid. The protein localises to the chloroplast thylakoid membrane. It catalyses the reaction a plastoquinone + NADH + (n+1) H(+)(in) = a plastoquinol + NAD(+) + n H(+)(out). The enzyme catalyses a plastoquinone + NADPH + (n+1) H(+)(in) = a plastoquinol + NADP(+) + n H(+)(out). NDH shuttles electrons from NAD(P)H:plastoquinone, via FMN and iron-sulfur (Fe-S) centers, to quinones in the photosynthetic chain and possibly in a chloroplast respiratory chain. The immediate electron acceptor for the enzyme in this species is believed to be plastoquinone. Couples the redox reaction to proton translocation, and thus conserves the redox energy in a proton gradient. The sequence is that of NAD(P)H-quinone oxidoreductase subunit 1, chloroplastic from Chaetosphaeridium globosum (Charophycean green alga).